A 763-amino-acid chain; its full sequence is Phosphoglycerol transferase I (763 aa).

4 consecutive transmembrane segments (helical) span residues 1–21, 26–46, 77–97, and 108–128; these read MSEL…AWKA, WWFA…ITLF, ILPG…LGWI, and FGYS…SPAF.

This sequence belongs to the OpgB family.

It localises to the cell inner membrane. It carries out the reaction a phosphatidylglycerol + a membrane-derived-oligosaccharide D-glucose = a 1,2-diacyl-sn-glycerol + a membrane-derived-oligosaccharide 6-(glycerophospho)-D-glucose.. It participates in glycan metabolism; osmoregulated periplasmic glucan (OPG) biosynthesis. Transfers a phosphoglycerol residue from phosphatidylglycerol to the membrane-bound nascent glucan backbones. This Escherichia coli O6:K15:H31 (strain 536 / UPEC) protein is Phosphoglycerol transferase I.